We begin with the raw amino-acid sequence, 92 residues long: Large ribosomal subunit protein eL43z (92 aa).

The segment at 39 to 60 adopts a C4-type zinc-finger fold; that stretch reads CEFCGKFAVKRKAVGIWGCKDC.

Belongs to the eukaryotic ribosomal protein eL43 family.

The sequence is that of Large ribosomal subunit protein eL43z from Oryza sativa subsp. japonica (Rice).